We begin with the raw amino-acid sequence, 1388 residues long: DNA-directed RNA polymerase subunit beta (1388 aa).

This sequence belongs to the RNA polymerase beta chain family. The RNAP catalytic core consists of 2 alpha, 1 beta, 1 beta' and 1 omega subunit. When a sigma factor is associated with the core the holoenzyme is formed, which can initiate transcription.

The catalysed reaction is RNA(n) + a ribonucleoside 5'-triphosphate = RNA(n+1) + diphosphate. Its function is as follows. DNA-dependent RNA polymerase catalyzes the transcription of DNA into RNA using the four ribonucleoside triphosphates as substrates. The polypeptide is DNA-directed RNA polymerase subunit beta (Xylella fastidiosa (strain Temecula1 / ATCC 700964)).